A 474-amino-acid chain; its full sequence is UDP-glycosyltransferase 71C2 (474 aa).

UDP-alpha-D-glucose contacts are provided by residues serine 293, 352–354, 369–377, and 391–394; these read APQ, HCGWNSILE, and YAEQ.

It belongs to the UDP-glycosyltransferase family.

Its function is as follows. Possesses low quercetin 3-O-glucosyltransferase, 7-O-glucosyltransferase and 3'-O-glucosyltransferase activities in vitro. Glucosylates other secondary metabolites in vitro like vanillin, trans-resveratrol, curumin and etoposide. This Arabidopsis thaliana (Mouse-ear cress) protein is UDP-glycosyltransferase 71C2 (UGT71C2).